We begin with the raw amino-acid sequence, 555 residues long: 6-phosphofructo-2-kinase/fructose-2,6-bisphosphatase 3 (555 aa).

The tract at residues 1–245 is 6-phosphofructo-2-kinase; the sequence is MPLELTQSRV…VYYLMNIHVQ (245 aa). 42-50 provides a ligand contact to ATP; the sequence is GLPARGKTY. Arg75 and Arg99 together coordinate beta-D-fructose 6-phosphate. Asp125 is an active-site residue. The beta-D-fructose 6-phosphate site is built by Thr127 and Arg133. Residue Cys155 is part of the active site. Position 164 to 169 (164 to 169) interacts with ATP; the sequence is NIMEVK. Residues Lys169, Arg190, and Tyr194 each coordinate beta-D-fructose 6-phosphate. Residues 246-555 form a fructose-2,6-bisphosphatase region; it reads PRTIYLCRHG…CHIFSKFSPY (310 aa). Arg253 is a beta-D-fructose 2,6-bisphosphate binding site. His254 acts as the Tele-phosphohistidine intermediate in catalysis. Beta-D-fructose 2,6-bisphosphate is bound by residues Asn260 and Gly266. Glu323 functions as the Proton donor/acceptor in the catalytic mechanism. Beta-D-fructose 2,6-bisphosphate-binding residues include Tyr334, Arg348, Lys352, Tyr363, Gln389, and Arg393. Residue 345 to 348 participates in ATP binding; it reads YALR. Residues 389–393 and Tyr425 each bind ATP; that span reads QAVLR. The interval 475–504 is disordered; that stretch reads KQDAKKGPNPLMRRNSVTPLASPEPTKKPR. Phosphoserine; by AMPK and PKA is present on Ser490. Phosphothreonine is present on Thr492. Position 496 is a phosphoserine (Ser496).

This sequence in the C-terminal section; belongs to the phosphoglycerate mutase family. As to quaternary structure, homodimer. Forms a heterodimer with PFKFB2. Post-translationally, phosphorylation by AMPK stimulates activity.

The enzyme catalyses beta-D-fructose 2,6-bisphosphate + H2O = beta-D-fructose 6-phosphate + phosphate. It carries out the reaction beta-D-fructose 6-phosphate + ATP = beta-D-fructose 2,6-bisphosphate + ADP + H(+). Functionally, catalyzes both the synthesis and degradation of fructose 2,6-bisphosphate. This chain is 6-phosphofructo-2-kinase/fructose-2,6-bisphosphatase 3 (Pfkfb3), found in Rattus norvegicus (Rat).